We begin with the raw amino-acid sequence, 191 residues long: Prostaglandin-H2 D-isomerase (191 aa).

The first 24 residues, 1 to 24, serve as a signal peptide directing secretion; it reads MAALHTLWMGLVLLGVLGVLQTQA. Q25 is subject to Pyrrolidone carboxylic acid. A glycan (N-linked (GlcNAc...) asparagine) is linked at N51. Residue C65 is the Nucleophile of the active site. The N-linked (GlcNAc...) asparagine glycan is linked to N78. The cysteines at positions 89 and 186 are disulfide-linked.

It belongs to the calycin superfamily. Lipocalin family. Monomer.

The protein localises to the rough endoplasmic reticulum. It localises to the nucleus membrane. It is found in the golgi apparatus. The protein resides in the cytoplasm. Its subcellular location is the perinuclear region. The protein localises to the secreted. The catalysed reaction is prostaglandin H2 = prostaglandin D2. Catalyzes the conversion of PGH2 to PGD2, a prostaglandin involved in smooth muscle contraction/relaxation and a potent inhibitor of platelet aggregation. Involved in a variety of CNS functions, such as sedation, NREM sleep and PGE2-induced allodynia, and may have an anti-apoptotic role in oligodendrocytes. Binds small non-substrate lipophilic molecules, including biliverdin, bilirubin, retinal, retinoic acid and thyroid hormone, and may act as a scavenger for harmful hydrophobic molecules and as a secretory retinoid and thyroid hormone transporter. Possibly involved in development and maintenance of the blood-brain, blood-retina, blood-aqueous humor and blood-testis barrier. It is likely to play important roles in both maturation and maintenance of the central nervous system and male reproductive system. Involved in PLA2G3-dependent maturation of mast cells. PLA2G3 is secreted by immature mast cells and acts on nearby fibroblasts upstream to PTDGS to synthesize PGD2, which in turn promotes mast cell maturation and degranulation via PTGDR. This chain is Prostaglandin-H2 D-isomerase (PTGDS), found in Ursus arctos (Brown bear).